Consider the following 100-residue polypeptide: Elevenin-Vc1 (100 aa).

The signal sequence occupies residues 1–24 (MAPSQKALLVLVLSMLLTASDSWA). A disulfide bond links cysteine 29 and cysteine 38. The propeptide occupies 44–100 (KRGGDSLSVGGSAELDDALTDPFLRSEEPREWRELTRLSRVLQTFLSHPTGETEQHD).

Belongs to the elevenin family. As to quaternary structure, monomer. As to expression, expressed by the venom duct.

Its subcellular location is the secreted. In terms of biological role, may mimic the function of prey elevenin neuropeptide. In vivo, intracranial injection in mice induces hyperactivity (tested at 5 and 10 nM). The chain is Elevenin-Vc1 from Conus victoriae (Queen Victoria cone).